A 529-amino-acid chain; its full sequence is Berberine bridge enzyme-like 7 (529 aa).

Residues 1 to 19 (MKEALSILCLALLVSVSEA) form the signal peptide. Cysteine 32 and cysteine 95 are joined by a disulfide. N-linked (GlcNAc...) asparagine glycosylation is present at asparagine 52. The region spanning 69–247 (YSSPNFKKLL…LSWKINLVKV (179 aa)) is the FAD-binding PCMH-type domain. The 6-(S-cysteinyl)-8alpha-(pros-histidyl)-FAD (His-Cys) cross-link spans 110-172 (HDLEGLSYRS…QTLAFPAGVC (63 aa)). N-linked (GlcNAc...) asparagine glycosylation is found at asparagine 257, asparagine 341, and asparagine 439.

This sequence belongs to the oxygen-dependent FAD-linked oxidoreductase family. Requires FAD as cofactor. The FAD cofactor is bound via a bicovalent 6-S-cysteinyl, 8alpha-N1-histidyl FAD linkage.

It localises to the secreted. The protein localises to the cell wall. Probable flavin-dependent oxidoreductase. The protein is Berberine bridge enzyme-like 7 of Arabidopsis thaliana (Mouse-ear cress).